The following is a 277-amino-acid chain: Large ribosomal subunit protein uL2 (277 aa).

Disordered regions lie at residues 32 to 58 (KSLTKGKKLKSGRDSSGRISIRRRGGG) and 225 to 277 (VAMN…RRNK). Residues 258–277 (YKTRKKKRYSDKFIIKRRNK) show a composition bias toward basic residues.

The protein belongs to the universal ribosomal protein uL2 family. In terms of assembly, part of the 50S ribosomal subunit. Forms a bridge to the 30S subunit in the 70S ribosome.

Functionally, one of the primary rRNA binding proteins. Required for association of the 30S and 50S subunits to form the 70S ribosome, for tRNA binding and peptide bond formation. It has been suggested to have peptidyltransferase activity; this is somewhat controversial. Makes several contacts with the 16S rRNA in the 70S ribosome. The protein is Large ribosomal subunit protein uL2 of Borrelia garinii subsp. bavariensis (strain ATCC BAA-2496 / DSM 23469 / PBi) (Borreliella bavariensis).